The sequence spans 97 residues: Citrate lyase acyl carrier protein (97 aa).

Serine 14 carries the O-(phosphoribosyl dephospho-coenzyme A)serine modification.

Belongs to the CitD family. Oligomer with a subunit composition of (alpha,beta,gamma)6.

The protein localises to the cytoplasm. Covalent carrier of the coenzyme of citrate lyase. The polypeptide is Citrate lyase acyl carrier protein (Lactobacillus acidophilus (strain ATCC 700396 / NCK56 / N2 / NCFM)).